The sequence spans 295 residues: Acetyl-coenzyme A carboxylase carboxyl transferase subunit beta (295 aa).

The disordered stretch occupies residues 1–20; sequence MSWLSKLMPSGIRTENTPAK. A CoA carboxyltransferase N-terminal domain is found at 28–295; the sequence is LWEKCSNCGS…QPHPQDADAA (268 aa). Positions 32, 35, 51, and 54 each coordinate Zn(2+). The segment at 32–54 adopts a C4-type zinc-finger fold; that stretch reads CSNCGSALYGPELEENLEVCPKC.

It belongs to the AccD/PCCB family. As to quaternary structure, acetyl-CoA carboxylase is a heterohexamer composed of biotin carboxyl carrier protein (AccB), biotin carboxylase (AccC) and two subunits each of ACCase subunit alpha (AccA) and ACCase subunit beta (AccD). The cofactor is Zn(2+).

It localises to the cytoplasm. The catalysed reaction is N(6)-carboxybiotinyl-L-lysyl-[protein] + acetyl-CoA = N(6)-biotinyl-L-lysyl-[protein] + malonyl-CoA. It functions in the pathway lipid metabolism; malonyl-CoA biosynthesis; malonyl-CoA from acetyl-CoA: step 1/1. Component of the acetyl coenzyme A carboxylase (ACC) complex. Biotin carboxylase (BC) catalyzes the carboxylation of biotin on its carrier protein (BCCP) and then the CO(2) group is transferred by the transcarboxylase to acetyl-CoA to form malonyl-CoA. The sequence is that of Acetyl-coenzyme A carboxylase carboxyl transferase subunit beta from Xanthomonas campestris pv. campestris (strain B100).